The sequence spans 579 residues: MNAIVALCHFCELHGPRTLFCTEVLHAPLPQGAGSGDGAGRGEPADEEEGGIQMSSRIRAHSPAEGASAESSSPGPKKSDMCEGCRSLAAGHPGYISHDKETSIKYVSHQHPNHPQLFSIVRQACVRSLSCEVCPGREGPIFFGDEQHGFVFSHTFFIKDSLARGFQRWYSIIAIMMDRIYLINSWPFLLGKIRGIIDELQGKALKVFEAEQFGCPQRAQRMNTAFTPFLHQRNGNAARSLTSLTNDDSLWACLHTSFAWLLKACGSRLTEKLLEGAPTEDTLVQMEQLAELEEESESWDNSEAEEEEKGPALPEGAEGRELTKCPAESSLLSDCGAWQPRKLSVFKSLRHMRQVLGAPSFRTLAWHVLMGNQVIWKSRDSDLVHSAFEVLRTMLPVGCVRVIPYSSQYEEAYRCNFLGLSPHVQIPPHVLASEFAVVVEVHTATRSSLHAVGCESEQPLSKYEFVVTSGSPVAADRVGPTILNKMEAALTNQNLSVDVVDQCLVCLKEEWMNKVKVLFKFTKVDSRPKEDTQKLLSILGASEEDNVKLLKFWMTGLSKTYKSHLMSTVRSPTALEPRN.

A disordered region spans residues 32–82; it reads GAGSGDGAGRGEPADEEEGGIQMSSRIRAHSPAEGASAESSSPGPKKSDMC. Phosphoserine is present on residues serine 62 and serine 73. Low complexity predominate over residues 63–76; the sequence is PAEGASAESSSPGP. One can recognise a uDENN FLCN/SMCR8-type domain in the interval 86-242; the sequence is RSLAAGHPGY…RNGNAARSLT (157 aa). Positions 285 to 309 form a coiled coil; the sequence is QMEQLAELEEESESWDNSEAEEEEK. Residues 294–308 show a composition bias toward acidic residues; it reads EESESWDNSEAEEEE. The interval 294 to 321 is disordered; it reads EESESWDNSEAEEEEKGPALPEGAEGRE. Phosphoserine occurs at positions 302, 406, 537, 542, and 571. A cDENN FLCN/SMCR8-type domain is found at 339 to 491; the sequence is QPRKLSVFKS…ILNKMEAALT (153 aa). Positions 493–558 constitute a dDENN FLCN/SMCR8-type domain; the sequence is QNLSVDVVDQ…LLKFWMTGLS (66 aa).

It belongs to the folliculin family. Interacts (via C-terminus) with FNIP1 or FNIP2 (via C-terminus). Component of the lysosomal folliculin complex (LFC), composed of FLCN, FNIP1 (or FNIP2), RagA/RRAGA or RagB/RRAGB GDP-bound, RagC/RRAGC or RagD/RRAGD GTP-bound, and Ragulator. Interaction with FNIP1 or FNIP2 mediates indirect interaction with the PRKAA1, PRKAB1 and PRKAG1 subunits of 5'-AMP-activated protein kinase (AMPK). Interacts with HSP90AA1 in the presence of FNIP1. Interacts with HSP70, STUB1, CDC37, AHSA1, CCT2, STIP1, PTGES3 and PPP5C. Interacts with GABARAP; interaction takes place in the presence of FNIP1 and/or FNIP2. Interacts with RILP; the interaction is direct and promotes association between RILP and RAB34. Interacts with KIF3A and KIF3B. Interacts with lactate dehydrogenase LDHA, but not LDHB; the interaction is direct, may preferentially bind LDHA dimers rather than tetramers, and regulates LDHA activity, acting as an uncompetitive inhibitor. Phosphorylation by ULK1 modulates the interaction with GABARAP and is required to regulate autophagy.

It is found in the lysosome membrane. It localises to the cytoplasm. The protein localises to the cytosol. The protein resides in the cell projection. Its subcellular location is the cilium. It is found in the cytoskeleton. It localises to the microtubule organizing center. The protein localises to the centrosome. The protein resides in the spindle. Its subcellular location is the nucleus. Its activity is regulated as follows. GTPase-activating activity is inhibited in the folliculin complex (LFC), which stabilizes the GDP-bound state of RagA/RRAGA (or RagB/RRAGB), because Arg-164 is located far from the RagC/RRAGC or RagD/RRAGD nucleotide pocket. Disassembly of the LFC complex upon amino acid restimulation liberates the GTPase-activating activity. Its function is as follows. Multi-functional protein, involved in both the cellular response to amino acid availability and in the regulation of glycolysis. GTPase-activating protein that plays a key role in the cellular response to amino acid availability through regulation of the non-canonical mTORC1 signaling cascade controlling the MiT/TFE factors TFEB and TFE3. Activates mTORC1 by acting as a GTPase-activating protein: specifically stimulates GTP hydrolysis by RagC/RRAGC or RagD/RRAGD, promoting the conversion to the GDP-bound state of RagC/RRAGC or RagD/RRAGD, and thereby activating the kinase activity of mTORC1. The GTPase-activating activity is inhibited during starvation and activated in presence of nutrients. Acts as a key component for non-canonical mTORC1-dependent control of the MiT/TFE factors TFEB and TFE3, while it is not involved in mTORC1-dependent phosphorylation of canonical RPS6KB1/S6K1 and EIF4EBP1/4E-BP1. In low-amino acid conditions, the lysosomal folliculin complex (LFC) is formed on the membrane of lysosomes, which inhibits the GTPase-activating activity of FLCN, inactivates mTORC1 and maximizes nuclear translocation of TFEB and TFE3. Upon amino acid restimulation, RagA/RRAGA (or RagB/RRAGB) nucleotide exchange promotes disassembly of the LFC complex and liberates the GTPase-activating activity of FLCN, leading to activation of mTORC1 and subsequent cytoplasmic retention of TFEB and TFE3. Indirectly acts as a positive regulator of Wnt signaling by promoting mTOR-dependent cytoplasmic retention of MiT/TFE factor TFE3. Required for the exit of hematopoietic stem cell from pluripotency by promoting mTOR-dependent cytoplasmic retention of TFE3, thereby increasing Wnt signaling. Involved in the control of embryonic stem cells differentiation; together with LAMTOR1 it is necessary to recruit and activate RagC/RRAGC and RagD/RRAGD at the lysosomes, and to induce exit of embryonic stem cells from pluripotency via non-canonical, mTOR-independent TFE3 inactivation. Acts as an inhibitor of browning of adipose tissue by regulating mTOR-dependent cytoplasmic retention of TFE3. In response to flow stress, regulates STK11/LKB1 accumulation and mTORC1 activation through primary cilia: may act by recruiting STK11/LKB1 to primary cilia for activation of AMPK resided at basal bodies, causing mTORC1 down-regulation. Together with FNIP1 and/or FNIP2, regulates autophagy: following phosphorylation by ULK1, interacts with GABARAP and promotes autophagy. Required for starvation-induced perinuclear clustering of lysosomes by promoting association of RILP with its effector RAB34. Regulates glycolysis by binding to lactate dehydrogenase LDHA, acting as an uncompetitive inhibitor. In Bos taurus (Bovine), this protein is Folliculin.